The chain runs to 104 residues: L-rhamnose mutarotase (104 aa).

Tyr-18 lines the substrate pocket. His-22 functions as the Proton donor in the catalytic mechanism. Residues Tyr-41 and 76 to 77 contribute to the substrate site; that span reads WW.

Belongs to the rhamnose mutarotase family. As to quaternary structure, homodimer.

The protein resides in the cytoplasm. It carries out the reaction alpha-L-rhamnose = beta-L-rhamnose. It participates in carbohydrate metabolism; L-rhamnose metabolism. Involved in the anomeric conversion of L-rhamnose. The polypeptide is L-rhamnose mutarotase (Acidiphilium cryptum (strain JF-5)).